Reading from the N-terminus, the 313-residue chain is Olfactory receptor 2B6 (313 aa).

Residues 1-25 lie on the Extracellular side of the membrane; it reads MNWVNDSIIQEFILLGFSDRPWLEF. A glycan (N-linked (GlcNAc...) asparagine) is linked at Asn-5. The helical transmembrane segment at 26–49 threads the bilayer; it reads PLLVVFLISYTVTIFGNLTIILVS. Over 50–57 the chain is Cytoplasmic; the sequence is RLDTKLHT. The chain crosses the membrane as a helical span at residues 58–79; it reads PMYFFLTNLSLLDLCYTTCTVP. The Extracellular portion of the chain corresponds to 80–100; the sequence is QMLVNLCSIRKVISYRGCVAQ. The cysteines at positions 97 and 189 are disulfide-linked. Residues 101–120 form a helical membrane-spanning segment; sequence LFIFLALGATEYLLLAVMSF. At 121 to 139 the chain is on the cytoplasmic side; that stretch reads DRFVAICRPLHYSVIMHQR. The chain crosses the membrane as a helical span at residues 140–158; it reads LCLQLAAASWVTGFSNSVW. Topologically, residues 159 to 195 are extracellular; it reads LSTLTLQLPLCDPYVIDHFLCEVPALLKLSCVETTAN. Residues 196–219 form a helical membrane-spanning segment; that stretch reads EAELFLVSELFHLIPLTLILISYA. Residues 220–236 are Cytoplasmic-facing; that stretch reads FIVRAVLRIQSAEGRQK. A helical transmembrane segment spans residues 237–259; it reads AFGTCGSHLIVVSLFYSTAVSVY. At 260–272 the chain is on the extracellular side; sequence LQPPSPSSKDQGK. The chain crosses the membrane as a helical span at residues 273-292; sequence MVSLFYGIIAPMLNPLIYTL. Over 293-313 the chain is Cytoplasmic; sequence RNKEVKEGFKRLVARVFLIKK.

This sequence belongs to the G-protein coupled receptor 1 family.

Its subcellular location is the cell membrane. Odorant receptor. In Homo sapiens (Human), this protein is Olfactory receptor 2B6.